The chain runs to 68 residues: uncharacterized protein (68 aa).

The next 2 helical transmembrane spans lie at 1–21 (MLFI…YFLP) and 28–48 (VHFS…LSSV).

It localises to the cell membrane. This is an uncharacterized protein from Haemophilus influenzae (strain ATCC 51907 / DSM 11121 / KW20 / Rd).